The following is a 553-amino-acid chain: Dihydroxy-acid dehydratase (553 aa).

Asp-78 contacts Mg(2+). Position 119 (Cys-119) interacts with [2Fe-2S] cluster. Mg(2+) is bound by residues Asp-120 and Lys-121. Position 121 is an N6-carboxylysine (Lys-121). Cys-193 provides a ligand contact to [2Fe-2S] cluster. Glu-441 lines the Mg(2+) pocket. The active-site Proton acceptor is the Ser-467.

It belongs to the IlvD/Edd family. In terms of assembly, homodimer. Requires [2Fe-2S] cluster as cofactor. It depends on Mg(2+) as a cofactor.

The catalysed reaction is (2R)-2,3-dihydroxy-3-methylbutanoate = 3-methyl-2-oxobutanoate + H2O. It carries out the reaction (2R,3R)-2,3-dihydroxy-3-methylpentanoate = (S)-3-methyl-2-oxopentanoate + H2O. It functions in the pathway amino-acid biosynthesis; L-isoleucine biosynthesis; L-isoleucine from 2-oxobutanoate: step 3/4. It participates in amino-acid biosynthesis; L-valine biosynthesis; L-valine from pyruvate: step 3/4. Functions in the biosynthesis of branched-chain amino acids. Catalyzes the dehydration of (2R,3R)-2,3-dihydroxy-3-methylpentanoate (2,3-dihydroxy-3-methylvalerate) into 2-oxo-3-methylpentanoate (2-oxo-3-methylvalerate) and of (2R)-2,3-dihydroxy-3-methylbutanoate (2,3-dihydroxyisovalerate) into 2-oxo-3-methylbutanoate (2-oxoisovalerate), the penultimate precursor to L-isoleucine and L-valine, respectively. The polypeptide is Dihydroxy-acid dehydratase (Pelobacter propionicus (strain DSM 2379 / NBRC 103807 / OttBd1)).